The sequence spans 194 residues: MSWHTGSNQDNKLFPKGKLSGSYAPLDIAFENSPAMNEFENRLCHNNPIISERSMSPAVSASYSNPEATSCGCMQTQTQPQHQTLSQHLPQTHHTDAHDQQKLSGIFYNRTTDAQNQFSETINPPPSYTVHNTDIRIPLNRQQQYPANHLGSELLEGYNNVGTEPCMGFWEILLLIILIAVLVYGIYWLYKSEK.

Residues 77–92 (QTQPQHQTLSQHLPQT) are compositionally biased toward polar residues. The tract at residues 77-96 (QTQPQHQTLSQHLPQTHHTD) is disordered. Residues 169-189 (FWEILLLIILIAVLVYGIYWL) form a helical membrane-spanning segment.

The protein resides in the host membrane. Its subcellular location is the virion. This is an uncharacterized protein from Acanthamoeba polyphaga (Amoeba).